Here is a 560-residue protein sequence, read N- to C-terminus: Dihydroxy-acid dehydratase (560 aa).

C52 serves as a coordination point for [2Fe-2S] cluster. D84 is a Mg(2+) binding site. Residue C125 participates in [2Fe-2S] cluster binding. Mg(2+) contacts are provided by D126 and K127. At K127 the chain carries N6-carboxylysine. [2Fe-2S] cluster is bound at residue C197. Residue E448 coordinates Mg(2+). Residue S474 is the Proton acceptor of the active site.

Belongs to the IlvD/Edd family. In terms of assembly, homodimer. [2Fe-2S] cluster serves as cofactor. Requires Mg(2+) as cofactor.

The enzyme catalyses (2R)-2,3-dihydroxy-3-methylbutanoate = 3-methyl-2-oxobutanoate + H2O. It catalyses the reaction (2R,3R)-2,3-dihydroxy-3-methylpentanoate = (S)-3-methyl-2-oxopentanoate + H2O. It functions in the pathway amino-acid biosynthesis; L-isoleucine biosynthesis; L-isoleucine from 2-oxobutanoate: step 3/4. The protein operates within amino-acid biosynthesis; L-valine biosynthesis; L-valine from pyruvate: step 3/4. In terms of biological role, functions in the biosynthesis of branched-chain amino acids. Catalyzes the dehydration of (2R,3R)-2,3-dihydroxy-3-methylpentanoate (2,3-dihydroxy-3-methylvalerate) into 2-oxo-3-methylpentanoate (2-oxo-3-methylvalerate) and of (2R)-2,3-dihydroxy-3-methylbutanoate (2,3-dihydroxyisovalerate) into 2-oxo-3-methylbutanoate (2-oxoisovalerate), the penultimate precursor to L-isoleucine and L-valine, respectively. This Leptospira borgpetersenii serovar Hardjo-bovis (strain JB197) protein is Dihydroxy-acid dehydratase.